We begin with the raw amino-acid sequence, 305 residues long: Probable 4-deoxy-4-formamido-L-arabinose-phosphoundecaprenol deformylase ArnD (305 aa).

The 256-residue stretch at 7-262 (TKVGLRIDVD…QAKENNIEFV (256 aa)) folds into the NodB homology domain.

Belongs to the polysaccharide deacetylase family. ArnD deformylase subfamily.

The catalysed reaction is 4-deoxy-4-formamido-alpha-L-arabinopyranosyl di-trans,octa-cis-undecaprenyl phosphate + H2O = 4-amino-4-deoxy-alpha-L-arabinopyranosyl di-trans,octa-cis-undecaprenyl phosphate + formate. Its pathway is glycolipid biosynthesis; 4-amino-4-deoxy-alpha-L-arabinose undecaprenyl phosphate biosynthesis; 4-amino-4-deoxy-alpha-L-arabinose undecaprenyl phosphate from UDP-4-deoxy-4-formamido-beta-L-arabinose and undecaprenyl phosphate: step 2/2. It functions in the pathway bacterial outer membrane biogenesis; lipopolysaccharide biosynthesis. Catalyzes the deformylation of 4-deoxy-4-formamido-L-arabinose-phosphoundecaprenol to 4-amino-4-deoxy-L-arabinose-phosphoundecaprenol. The modified arabinose is attached to lipid A and is required for resistance to polymyxin and cationic antimicrobial peptides. This is Probable 4-deoxy-4-formamido-L-arabinose-phosphoundecaprenol deformylase ArnD from Shewanella sediminis (strain HAW-EB3).